The sequence spans 106 residues: Urease subunit beta (106 aa).

Belongs to the urease beta subunit family. In terms of assembly, heterotrimer of UreA (gamma), UreB (beta) and UreC (alpha) subunits. Three heterotrimers associate to form the active enzyme.

The protein resides in the cytoplasm. The enzyme catalyses urea + 2 H2O + H(+) = hydrogencarbonate + 2 NH4(+). The protein operates within nitrogen metabolism; urea degradation; CO(2) and NH(3) from urea (urease route): step 1/1. This Prochlorococcus marinus subsp. pastoris (strain CCMP1986 / NIES-2087 / MED4) protein is Urease subunit beta.